We begin with the raw amino-acid sequence, 244 residues long: tRNA (guanine-N(1)-)-methyltransferase (244 aa).

Residues Gly111 and 130–135 contribute to the S-adenosyl-L-methionine site; that span reads IGDYVL.

It belongs to the RNA methyltransferase TrmD family. As to quaternary structure, homodimer.

The protein resides in the cytoplasm. It carries out the reaction guanosine(37) in tRNA + S-adenosyl-L-methionine = N(1)-methylguanosine(37) in tRNA + S-adenosyl-L-homocysteine + H(+). Functionally, specifically methylates guanosine-37 in various tRNAs. The chain is tRNA (guanine-N(1)-)-methyltransferase from Phytoplasma australiense.